The following is a 1493-amino-acid chain: Mitogen-activated protein kinase kinase kinase 1 (1493 aa).

Low complexity-rich tracts occupy residues 1 to 23 (MAAA…ASPE) and 33 to 42 (GSGAPAAGAG). Disordered stretches follow at residues 1-171 (MAAA…DRPE) and 222-295 (LQGE…EETS). Ala-2 bears the N-acetylalanine mark. Ser-21 is subject to Phosphoserine. Over residues 84–94 (PPCPSTSPSPE) the composition is skewed to pro residues. Composition is skewed to low complexity over residues 95–108 (PADA…FQPA) and 135–151 (ARSP…APSG). Ser-137 bears the Phosphoserine mark. Residues 152-171 (REMENKETLKGLHKMDDRPE) show a composition bias toward basic and acidic residues. Residues 230-257 (SAAPAPKGRRSPSPGSSPSGRSGKPESP) show a composition bias toward low complexity. Ser-265 carries the post-translational modification Phosphoserine. Thr-275 bears the Phosphothreonine mark. Phosphoserine is present on residues Ser-282, Ser-287, and Ser-290. The segment at 328-356 (YRVFIGPQNCSCGRGTFCIHLLFVMLRVF) adopts an SWIM-type zinc-finger fold. An RING-type zinc finger spans residues 433 to 482 (CPICLLGMLDEESLTVCEDGCRNKLHHHCMSIWAEECRRNREPLICPLCR). Residues 496 to 506 (SSPVDSPTSLR) show a composition bias toward polar residues. Disordered regions lie at residues 496–524 (SSPV…SQRR), 866–910 (DTLD…LSAS), 923–955 (VGLP…SPLS), and 992–1060 (PCKI…ASKN). 3 positions are modified to phosphoserine: Ser-497, Ser-521, and Ser-910. The segment covering 507-522 (GVQQPSSPQQPVAGSQ) has biased composition (low complexity). Composition is skewed to polar residues over residues 925–940 (LPSS…TVQT) and 998–1014 (ASPQ…QRTC). 2 positions are modified to phosphoserine: Ser-999 and Ser-1024. The span at 1049–1060 (GSTSKLGDASKN) shows a compositional bias: polar residues. The Protein kinase domain maps to 1224–1489 (WLKGQQIGLG…SRELLKHPVF (266 aa)). ATP contacts are provided by residues 1230-1238 (IGLGAFSSC) and Lys-1253. Catalysis depends on Asp-1350, which acts as the Proton acceptor. Residues Thr-1381 and Thr-1393 each carry the phosphothreonine; by autocatalysis modification.

This sequence belongs to the protein kinase superfamily. STE Ser/Thr protein kinase family. MAP kinase kinase kinase subfamily. As to quaternary structure, binds both upstream activators and downstream substrates in multimolecular complexes through its N-terminus. Oligomerizes after binding MAP4K2 or TRAF2. Interacts (via the kinase catalytic domain) with STK38. Interacts with GRIPAP1. Mg(2+) serves as cofactor. Autophosphorylated. In terms of tissue distribution, most highly expressed in spleen, kidney and lung.

Its subcellular location is the membrane. The catalysed reaction is L-seryl-[protein] + ATP = O-phospho-L-seryl-[protein] + ADP + H(+). It catalyses the reaction L-threonyl-[protein] + ATP = O-phospho-L-threonyl-[protein] + ADP + H(+). With respect to regulation, activated by autophosphorylation on Thr-1381 and Thr-1393 following oligomerization. Component of a protein kinase signal transduction cascade. Activates the ERK and JNK kinase pathways by phosphorylation of MAP2K1 and MAP2K4. May phosphorylate the MAPK8/JNK1 kinase. Activates CHUK and IKBKB, the central protein kinases of the NF-kappa-B pathway. In Rattus norvegicus (Rat), this protein is Mitogen-activated protein kinase kinase kinase 1 (Map3k1).